The chain runs to 309 residues: MSIRIIPQDELGSSEKRTADMIPPLLFPRLKNLYNRRAERLRELAENNPLGDYLRFAALIAHAQEVVLYDHPLEMDLTARIKEASAQGKPPLDIHVLPRDKHWQKLLMALIAELKPEMSGPALAVIENLEKASTQELEDMASALFASDFSSVSSDKAPFIWAALSLYWAQMANLIPGKARAEYGEQRQYCPVCGSMPVSSMVQIGTTQGLRYLHCNLCETEWHVVRVKCSNCEQSGKLHYWSLDDEQAAIKAESCDDCGTYLKILYQEKDPKIEAVADDLASLVLDARMEQEGYARSSINPFLFPGEGE.

The protein belongs to the FdhE family.

Its subcellular location is the cytoplasm. Functionally, necessary for formate dehydrogenase activity. The sequence is that of Protein FdhE from Escherichia coli O9:H4 (strain HS).